Reading from the N-terminus, the 182-residue chain is MISSTMAARVVDPYAEALVSLASAQGLLDTFEADIRFIAAVVQATPELGQFLASPLVKAEAKKNLLQQVFADQIHPLLLNALKLLSDRRRIMFLGAVCQRFLELQRKLKNIVLAEVTTAVPLTEAQQQSIRERVRDFTQASGVELQTSQDPTLLGGVIIKIGSQVIDLSLRGQLRRLALQLA.

Belongs to the ATPase delta chain family. As to quaternary structure, F-type ATPases have 2 components, F(1) - the catalytic core - and F(0) - the membrane proton channel. F(1) has five subunits: alpha(3), beta(3), gamma(1), delta(1), epsilon(1). CF(0) has four main subunits: a(1), b(1), b'(1) and c(10-14). The alpha and beta chains form an alternating ring which encloses part of the gamma chain. F(1) is attached to F(0) by a central stalk formed by the gamma and epsilon chains, while a peripheral stalk is formed by the delta, b and b' chains.

Its subcellular location is the cellular thylakoid membrane. Functionally, f(1)F(0) ATP synthase produces ATP from ADP in the presence of a proton or sodium gradient. F-type ATPases consist of two structural domains, F(1) containing the extramembraneous catalytic core and F(0) containing the membrane proton channel, linked together by a central stalk and a peripheral stalk. During catalysis, ATP synthesis in the catalytic domain of F(1) is coupled via a rotary mechanism of the central stalk subunits to proton translocation. In terms of biological role, this protein is part of the stalk that links CF(0) to CF(1). It either transmits conformational changes from CF(0) to CF(1) or is implicated in proton conduction. The chain is ATP synthase subunit delta from Synechococcus sp. (strain JA-3-3Ab) (Cyanobacteria bacterium Yellowstone A-Prime).